A 401-amino-acid chain; its full sequence is Voltage-gated potassium channel subunit beta-1 (401 aa).

The NADP(+) site is built by Thr90, Trp91, Gln97, and Asp119. Tyr124 acts as the Proton donor/acceptor in catalysis. Residues Asn192, Ser222, Arg223, Gln248, Trp277, Ser278, Pro279, Leu280, Ala281, Cys282, Lys288, Arg298, Gly357, Ser359, Gln363, Glu366, and Asn367 each coordinate NADP(+).

It belongs to the shaker potassium channel beta subunit family. In terms of assembly, homotetramer. Interaction with tetrameric potassium channel alpha subunits gives rise to a heterooctamer. Identified in potassium channel complexes containing KCNA1, KCNA2, KCNA4, KCNA5, KCNA6, KCNAB1 and KCNAB2. Part of a complex containing KCNA1, KCNA4 and LGI1; interaction with LGI1 inhibits down-regulation of KCNA1 channel activity. Interacts with the dimer formed by GNB1 and GNG2; this enhances KCNA1 binding. Interacts with SQSTM1.

The protein localises to the cytoplasm. Its subcellular location is the membrane. It localises to the cell membrane. It carries out the reaction a primary alcohol + NADP(+) = an aldehyde + NADPH + H(+). It catalyses the reaction a secondary alcohol + NADP(+) = a ketone + NADPH + H(+). Regulatory subunit of the voltage-gated potassium (Kv) channels composed of pore-forming and potassium-conducting alpha subunits and of regulatory beta subunits. The beta-1/KCNAB1 cytoplasmic subunit mediates closure of delayed rectifier potassium channels by physically obstructing the pore via its N-terminal domain and increases the speed of channel closure for other family members. Promotes the inactivation of KCNA1, KCNA2, KCNA4, KCNA5 and KCNA6 alpha subunit-containing channels. Displays nicotinamide adenine dinucleotide phosphate (NADPH)-dependent aldoketoreductase activity by catalyzing the NADPH-dependent reduction of a variety of endogenous aldehydes and ketones. The binding of NADPH is required for efficient down-regulation of potassium channel activity. Oxidation of the bound NADPH restrains N-terminal domain from blocking the channel, thereby decreasing N-type inactivation of potassium channel activity. This is Voltage-gated potassium channel subunit beta-1 (KCNAB1) from Bos taurus (Bovine).